The sequence spans 149 residues: Endoribonuclease YbeY (149 aa).

Residues H101, H105, and H111 each coordinate Zn(2+).

This sequence belongs to the endoribonuclease YbeY family. The cofactor is Zn(2+).

It is found in the cytoplasm. Functionally, single strand-specific metallo-endoribonuclease involved in late-stage 70S ribosome quality control and in maturation of the 3' terminus of the 16S rRNA. This chain is Endoribonuclease YbeY, found in Thermotoga neapolitana (strain ATCC 49049 / DSM 4359 / NBRC 107923 / NS-E).